The following is a 240-amino-acid chain: Ribosomal RNA small subunit methyltransferase G (240 aa).

S-adenosyl-L-methionine contacts are provided by residues glycine 80, phenylalanine 85, 131–132 (AE), and arginine 150.

The protein belongs to the methyltransferase superfamily. RNA methyltransferase RsmG family.

It localises to the cytoplasm. Specifically methylates the N7 position of a guanine in 16S rRNA. This is Ribosomal RNA small subunit methyltransferase G from Dictyoglomus thermophilum (strain ATCC 35947 / DSM 3960 / H-6-12).